The sequence spans 770 residues: Lysine-specific histone demethylase 1 (770 aa).

A disordered region spans residues 1–21; it reads MSSDTGSEYLDEEIRGDELGP. Positions 28–126 constitute an SWIRM domain; that stretch reads LAAAASAARL…FGRYVRSTKI (99 aa). 137–165 serves as a coordination point for FAD; the sequence is VIVIGAGAAGISAATQLESFGFDVIVLEA. Positions 718 to 739 are disordered; it reads NEAVADIPNAPNAPNAQKPEEI.

The protein belongs to the flavin monoamine oxidase family. In terms of assembly, probably part of a large repressor complex. Interacts with CoREST protein spr-1. Interacts with chromobox protein homolog hpl-1. FAD serves as cofactor.

The protein localises to the nucleus. It carries out the reaction N(6),N(6)-dimethyl-L-lysyl(4)-[histone H3] + 2 A + 2 H2O = L-lysyl(4)-[histone H3] + 2 formaldehyde + 2 AH2. Its function is as follows. Histone demethylase that specifically demethylates 'Lys-4' of histone H3, a specific tag for epigenetic transcriptional activation, thereby acting as a corepressor. Acts by oxidizing the substrate by FAD to generate the corresponding imine that is subsequently hydrolyzed. Demethylates both mono- and di-methylated 'Lys-4' of histone H3. May be involved in H3 demethylation in mitotic cells including gut and embryonic cells. Participates in the transcriptional repression of the presenilin protein hop-1. May act via the formation of a multiprotein complex that remodel or modify the chromatin. Together with met-2, set-17 and set-26, required for transgenerational fertility. Plays a role in developmental growth and lifespan regulation in response to ultraviolet-induced damage. This is Lysine-specific histone demethylase 1 from Caenorhabditis elegans.